The primary structure comprises 484 residues: tRNA sulfurtransferase (484 aa).

The 105-residue stretch at 63–167 (DVFADRLACI…QDKLYMVERR (105 aa)) folds into the THUMP domain. Residues 185–186 (LI), lysine 267, glycine 289, and glutamine 298 contribute to the ATP site. The cysteines at positions 346 and 458 are disulfide-linked. Residues 406–484 (VASGEIIIDV…GYTNVKVYRP (79 aa)) form the Rhodanese domain. Residue cysteine 458 is the Cysteine persulfide intermediate of the active site.

The protein belongs to the ThiI family.

The protein resides in the cytoplasm. It catalyses the reaction [ThiI sulfur-carrier protein]-S-sulfanyl-L-cysteine + a uridine in tRNA + 2 reduced [2Fe-2S]-[ferredoxin] + ATP + H(+) = [ThiI sulfur-carrier protein]-L-cysteine + a 4-thiouridine in tRNA + 2 oxidized [2Fe-2S]-[ferredoxin] + AMP + diphosphate. The enzyme catalyses [ThiS sulfur-carrier protein]-C-terminal Gly-Gly-AMP + S-sulfanyl-L-cysteinyl-[cysteine desulfurase] + AH2 = [ThiS sulfur-carrier protein]-C-terminal-Gly-aminoethanethioate + L-cysteinyl-[cysteine desulfurase] + A + AMP + 2 H(+). Its pathway is cofactor biosynthesis; thiamine diphosphate biosynthesis. Functionally, catalyzes the ATP-dependent transfer of a sulfur to tRNA to produce 4-thiouridine in position 8 of tRNAs, which functions as a near-UV photosensor. Also catalyzes the transfer of sulfur to the sulfur carrier protein ThiS, forming ThiS-thiocarboxylate. This is a step in the synthesis of thiazole, in the thiamine biosynthesis pathway. The sulfur is donated as persulfide by IscS. This Shewanella frigidimarina (strain NCIMB 400) protein is tRNA sulfurtransferase.